A 189-amino-acid chain; its full sequence is UPF0494 membrane protein C977.06 (189 aa).

Transmembrane regions (helical) follow at residues 78 to 98 (WPLL…NFEV), 120 to 140 (IWGP…GLIY), and 148 to 168 (AIPL…VAMV).

Belongs to the UPF0494 family.

It localises to the membrane. The polypeptide is UPF0494 membrane protein C977.06 (Schizosaccharomyces pombe (strain 972 / ATCC 24843) (Fission yeast)).